Consider the following 107-residue polypeptide: EPIDERMAL PATTERNING FACTOR-like protein 3 (107 aa).

The first 24 residues, 1–24 (MEYMFLLMSKFFFVFPIIIYIGPA), serve as a signal peptide directing secretion. 3 cysteine pairs are disulfide-bonded: C64–C102, C68–C74, and C71–C104.

Belongs to the plant cysteine rich small secretory peptide family. Epidermal patterning factor subfamily.

It is found in the secreted. Its function is as follows. Controls stomatal patterning. The sequence is that of EPIDERMAL PATTERNING FACTOR-like protein 3 from Arabidopsis thaliana (Mouse-ear cress).